The chain runs to 500 residues: NAD(P)H-quinone oxidoreductase chain 4, chloroplastic (500 aa).

A run of 13 helical transmembrane segments spans residues 4–24 (FPWLTIIVVFPISAGSLMLFL), 35–55 (YTISICILELLLTTYAFCYNF), 87–107 (IGTILLTGFITTLATLAAFPV), 134–154 (LLLFFIMWELELIPVYHLLSM), 167–187 (FILYTAGSSIFLLIGVLGISL), 211–231 (ILFYIGFLIAFAVKSPIIPLH), 242–262 (HYSTCMLLAGILLKMGAYGLV), 272–292 (AHSMFSPWLMVVGTIQIIYAA), 305–325 (IAYSSVSHMGFIIIGISSITD), 330–350 (GAILQIISHGFIGAALFFLAG), 386–406 (LALPGMSGFVAELIVFFGIIT), 416–436 (IFIIFVMAIGMILTPIYLLSM), and 462–482 (LFLSISILLPIIGIGIYPDFV).

Belongs to the complex I subunit 4 family.

The protein localises to the plastid. The protein resides in the chloroplast thylakoid membrane. It catalyses the reaction a plastoquinone + NADH + (n+1) H(+)(in) = a plastoquinol + NAD(+) + n H(+)(out). The catalysed reaction is a plastoquinone + NADPH + (n+1) H(+)(in) = a plastoquinol + NADP(+) + n H(+)(out). The sequence is that of NAD(P)H-quinone oxidoreductase chain 4, chloroplastic from Crucihimalaya wallichii (Rock-cress).